Reading from the N-terminus, the 176-residue chain is Ribosome maturation factor RimM (176 aa).

A PRC barrel domain is found at 96–176; that stretch reads PADEFYWRDL…QILVDWDPDF (81 aa).

Belongs to the RimM family. In terms of assembly, binds ribosomal protein uS19.

The protein resides in the cytoplasm. Its function is as follows. An accessory protein needed during the final step in the assembly of 30S ribosomal subunit, possibly for assembly of the head region. Essential for efficient processing of 16S rRNA. May be needed both before and after RbfA during the maturation of 16S rRNA. It has affinity for free ribosomal 30S subunits but not for 70S ribosomes. The sequence is that of Ribosome maturation factor RimM from Shewanella baltica (strain OS223).